Consider the following 124-residue polypeptide: Small ribosomal subunit protein uS13 (124 aa).

The tract at residues 94–124 is disordered; it reads GLPLRGQRTKNNSRTRKGKRKTVANKKKATK. Residues 100–124 show a composition bias toward basic residues; sequence QRTKNNSRTRKGKRKTVANKKKATK.

This sequence belongs to the universal ribosomal protein uS13 family. As to quaternary structure, part of the 30S ribosomal subunit. Forms a loose heterodimer with protein S19. Forms two bridges to the 50S subunit in the 70S ribosome.

In terms of biological role, located at the top of the head of the 30S subunit, it contacts several helices of the 16S rRNA. In the 70S ribosome it contacts the 23S rRNA (bridge B1a) and protein L5 of the 50S subunit (bridge B1b), connecting the 2 subunits; these bridges are implicated in subunit movement. Contacts the tRNAs in the A and P-sites. The protein is Small ribosomal subunit protein uS13 of Flavobacterium psychrophilum (strain ATCC 49511 / DSM 21280 / CIP 103535 / JIP02/86).